An 883-amino-acid chain; its full sequence is Alanine--tRNA ligase (883 aa).

Zn(2+)-binding residues include His562, His566, Cys675, and His679.

This sequence belongs to the class-II aminoacyl-tRNA synthetase family. Zn(2+) serves as cofactor.

The protein resides in the cytoplasm. It catalyses the reaction tRNA(Ala) + L-alanine + ATP = L-alanyl-tRNA(Ala) + AMP + diphosphate. Functionally, catalyzes the attachment of alanine to tRNA(Ala) in a two-step reaction: alanine is first activated by ATP to form Ala-AMP and then transferred to the acceptor end of tRNA(Ala). Also edits incorrectly charged Ser-tRNA(Ala) and Gly-tRNA(Ala) via its editing domain. The protein is Alanine--tRNA ligase of Ruegeria sp. (strain TM1040) (Silicibacter sp.).